We begin with the raw amino-acid sequence, 180 residues long: CASP-like protein 5A1 (180 aa).

The Cytoplasmic segment spans residues 1-36; the sequence is MEVSHPAVHPVAVPPVLTEPPARVRMKDYQGMPGTL. A helical transmembrane segment spans residues 37-57; that stretch reads GGLALRLGQLGFAVLSFSIMV. Over 58-67 the chain is Extracellular; the sequence is STPDFSQVTA. A helical membrane pass occupies residues 68–88; it reads FCYLVAATVLQTLWSSITAVV. Over 89–102 the chain is Cytoplasmic; sequence DIYALSVRRSLHHS. A helical transmembrane segment spans residues 103-123; it reads LLVGLFAVGDGVTSTLTFAAA. Topologically, residues 124 to 150 are extracellular; sequence CATAGITVLIDNDLDECGQNHCGRFEA. A helical transmembrane segment spans residues 151 to 171; sequence AAAMAFLSWIMAAPSFLLAFW. Over 172 to 180 the chain is Cytoplasmic; sequence SFGNKIVCF.

This sequence belongs to the Casparian strip membrane proteins (CASP) family. As to quaternary structure, homodimer and heterodimers.

It is found in the cell membrane. This is CASP-like protein 5A1 from Pteridium aquilinum subsp. aquilinum (Bracken fern).